The chain runs to 201 residues: FMN reductase (NADH) RutF (201 aa).

Residues Ala169–Ala201 form a disordered region.

The protein belongs to the non-flavoprotein flavin reductase family. RutF subfamily.

The catalysed reaction is FMNH2 + NAD(+) = FMN + NADH + 2 H(+). Catalyzes the reduction of FMN to FMNH2 which is used to reduce pyrimidine by RutA via the Rut pathway. This is FMN reductase (NADH) RutF from Methylorubrum extorquens (strain ATCC 14718 / DSM 1338 / JCM 2805 / NCIMB 9133 / AM1) (Methylobacterium extorquens).